The chain runs to 96 residues: Small ribosomal subunit protein bS6 (96 aa).

This sequence belongs to the bacterial ribosomal protein bS6 family.

Its function is as follows. Binds together with bS18 to 16S ribosomal RNA. This chain is Small ribosomal subunit protein bS6 (rpsF), found in Mycobacterium bovis (strain ATCC BAA-935 / AF2122/97).